A 413-amino-acid chain; its full sequence is Tyrosine--tRNA ligase (413 aa).

The 'HIGH' region signature appears at 59–68 (PTAPDIHLGH). The 'KMSKS' region motif lies at 243 to 247 (KMSKS). Lys-246 provides a ligand contact to ATP. One can recognise an S4 RNA-binding domain in the interval 351-411 (LAIGQLLKQA…GKRRFARVTL (61 aa)).

It belongs to the class-I aminoacyl-tRNA synthetase family. TyrS type 2 subfamily. As to quaternary structure, homodimer.

It is found in the cytoplasm. It catalyses the reaction tRNA(Tyr) + L-tyrosine + ATP = L-tyrosyl-tRNA(Tyr) + AMP + diphosphate + H(+). Functionally, catalyzes the attachment of tyrosine to tRNA(Tyr) in a two-step reaction: tyrosine is first activated by ATP to form Tyr-AMP and then transferred to the acceptor end of tRNA(Tyr). This chain is Tyrosine--tRNA ligase, found in Burkholderia pseudomallei (strain K96243).